Here is a 169-residue protein sequence, read N- to C-terminus: Allophycocyanin subunit beta-18 (169 aa).

Position 72 is an N4-methylasparagine (asparagine 72). Cysteine 82 is a binding site for (2R,3E)-phycocyanobilin.

This sequence belongs to the phycobiliprotein family. In terms of assembly, heterodimer of ApcE and this beta chain. Post-translationally, contains one covalently linked bilin chromophore. The chromophore is added by phycocyanobilin lyase CpcUS.

It localises to the cellular thylakoid membrane. A variant beta-allophycocyanin (AP) which forms a complex with ApcE, a phycobilisome terminal emitter that influences energy transfer to photosystem II. In Picosynechococcus sp. (strain ATCC 27264 / PCC 7002 / PR-6) (Agmenellum quadruplicatum), this protein is Allophycocyanin subunit beta-18 (apcF).